A 70-amino-acid chain; its full sequence is Large ribosomal subunit protein bL32 (70 aa).

Residues 1 to 19 (MAVPKRKTTPSRRGMRRSH) are compositionally biased toward basic residues. The interval 1-21 (MAVPKRKTTPSRRGMRRSHQA) is disordered.

It belongs to the bacterial ribosomal protein bL32 family.

The sequence is that of Large ribosomal subunit protein bL32 from Gluconobacter oxydans (strain 621H) (Gluconobacter suboxydans).